The following is a 427-amino-acid chain: Adenylosuccinate synthetase (427 aa).

Residues 12-18 (GDEGKGK) and 40-42 (GHT) contribute to the GTP site. The Proton acceptor role is filled by aspartate 13. 2 residues coordinate Mg(2+): aspartate 13 and glycine 40. Residues 13–16 (DEGK), 38–41 (NAGH), threonine 127, arginine 141, glutamine 222, threonine 237, and arginine 301 contribute to the IMP site. Histidine 41 acts as the Proton donor in catalysis. Substrate is bound at residue 297–303 (VVTKRPR). Residues arginine 303, 329-331 (SLD), and 411-413 (AVG) contribute to the GTP site.

It belongs to the adenylosuccinate synthetase family. Homodimer. Mg(2+) serves as cofactor.

The protein localises to the cytoplasm. It catalyses the reaction IMP + L-aspartate + GTP = N(6)-(1,2-dicarboxyethyl)-AMP + GDP + phosphate + 2 H(+). It functions in the pathway purine metabolism; AMP biosynthesis via de novo pathway; AMP from IMP: step 1/2. Functionally, plays an important role in the de novo pathway of purine nucleotide biosynthesis. Catalyzes the first committed step in the biosynthesis of AMP from IMP. The protein is Adenylosuccinate synthetase of Leuconostoc citreum (strain KM20).